We begin with the raw amino-acid sequence, 436 residues long: Chromosomal replication initiator protein DnaA (436 aa).

Residues 1-69 form a domain I, interacts with DnaA modulators region; sequence MLADEILELL…AYLYEVKTGK (69 aa). The interval 69–99 is domain II; it reads KKPEVEITSQTKLKNIKQNQVNVKQIKAQSS. The domain III, AAA+ region stretch occupies residues 100–314; the sequence is ILNPGYTFEN…GAIINLNAYA (215 aa). ATP is bound by residues G144, G146, K147, and T148. Residues 315–436 are domain IV, binds dsDNA; the sequence is SLMRVEITLE…EIKNKILTKG (122 aa).

Belongs to the DnaA family. In terms of assembly, oligomerizes as a right-handed, spiral filament on DNA at oriC.

It is found in the cytoplasm. Its function is as follows. Plays an essential role in the initiation and regulation of chromosomal replication. ATP-DnaA binds to the origin of replication (oriC) to initiate formation of the DNA replication initiation complex once per cell cycle. Binds the DnaA box (a 9 base pair repeat at the origin) and separates the double-stranded (ds)DNA. Forms a right-handed helical filament on oriC DNA; dsDNA binds to the exterior of the filament while single-stranded (ss)DNA is stabiized in the filament's interior. The ATP-DnaA-oriC complex binds and stabilizes one strand of the AT-rich DNA unwinding element (DUE), permitting loading of DNA polymerase. After initiation quickly degrades to an ADP-DnaA complex that is not apt for DNA replication. Binds acidic phospholipids. In Campylobacter concisus (strain 13826), this protein is Chromosomal replication initiator protein DnaA.